The sequence spans 458 residues: MVNLRNAVHSFLVHLIGLLVWQSDISVSPVAAIVTDIFNTSDGGRFKFPDGVQNWPALSIVIIIIMTIGGNILVIMAVSMEKKLHNATNYFLMSLAIADMLVGLLVMPLSLLAILYDYVWPLPRYLCPVWISLDVLFSTASIMHLCAISLDRYVAIRNPIEHSRFNSRTKAIMKIAIVWAISIGVSVPIPVIGLRDEEKVFVNNTTCVLNDPNFVLIGSFVAFFIPLTIMVITYCLTIYVLRRQALMLLHGHTEEPPGLSLDFLKCCKRNTAEEENSANPNQDQNARRRKKKERRPRGTMQAINNERKASKVLGIVFFVFLIMWCPFFITNILSVLCEKSCNQKLMEKLLNVFVWIGYVCSGINPLVYTLFNKIYRRAFSNYLRCNYKVEKKPPVRQIPRVAATALSGRELNVNIYRHTNEPVIEKASDNEPGIEMQVENLELPVNPSSVVSERISSV.

Residues 1 to 32 form the signal peptide; the sequence is MVNLRNAVHSFLVHLIGLLVWQSDISVSPVAA. At 33-55 the chain is on the extracellular side; it reads IVTDIFNTSDGGRFKFPDGVQNW. Asn39 is a glycosylation site (N-linked (GlcNAc...) asparagine). Residues 56–80 traverse the membrane as a helical segment; sequence PALSIVIIIIMTIGGNILVIMAVSM. The Cytoplasmic portion of the chain corresponds to 81 to 86; it reads EKKLHN. The chain crosses the membrane as a helical span at residues 87–111; sequence ATNYFLMSLAIADMLVGLLVMPLSL. Over 112–128 the chain is Extracellular; it reads LAILYDYVWPLPRYLCP. Residues Cys127 and Cys207 are joined by a disulfide bond. Residues 129-151 form a helical membrane-spanning segment; that stretch reads VWISLDVLFSTASIMHLCAISLD. Thr139 serves as a coordination point for ergotamine. The short motif at 151-153 is the DRY motif; important for ligand-induced conformation changes element; it reads DRY. The Cytoplasmic portion of the chain corresponds to 152 to 167; it reads RYVAIRNPIEHSRFNS. The chain crosses the membrane as a helical span at residues 168–189; sequence RTKAIMKIAIVWAISIGVSVPI. At 190–213 the chain is on the extracellular side; sequence PVIGLRDEEKVFVNNTTCVLNDPN. N-linked (GlcNAc...) asparagine glycosylation is present at Asn204. Residue Leu209 coordinates ergotamine. Residues 214 to 236 form a helical membrane-spanning segment; the sequence is FVLIGSFVAFFIPLTIMVITYCL. Topologically, residues 237 to 311 are cytoplasmic; that stretch reads TIYVLRRQAL…AINNERKASK (75 aa). The tract at residues 274 to 301 is disordered; sequence EENSANPNQDQNARRRKKKERRPRGTMQ. The segment covering 287–297 has biased composition (basic residues); that stretch reads RRRKKKERRPR. Residues 312-336 form a helical membrane-spanning segment; it reads VLGIVFFVFLIMWCPFFITNILSVL. Cysteines 337 and 341 form a disulfide. Residues 337–347 lie on the Extracellular side of the membrane; that stretch reads CEKSCNQKLME. Residues 348–370 traverse the membrane as a helical segment; that stretch reads KLLNVFVWIGYVCSGINPLVYTL. The NPxxY motif; important for ligand-induced conformation changes and signaling signature appears at 364 to 368; that stretch reads NPLVY. Residues 371-458 are Cytoplasmic-facing; it reads FNKIYRRAFS…SVVSERISSV (88 aa). A PDZ-binding motif is present at residues 456 to 458; it reads SSV.

Belongs to the G-protein coupled receptor 1 family. In terms of assembly, interacts with MPDZ. Interacts with ARRB2. Interacts with MPP3; this interaction stabilizes the receptor at the plasma membrane and prevents the desensitization of the HTR2C receptor-mediated calcium response. Post-translationally, N-glycosylated. Detected in brain.

The protein localises to the cell membrane. Its activity is regulated as follows. Inhibited by inverse agonist ritanserin. In terms of biological role, G-protein coupled receptor for 5-hydroxytryptamine (serotonin). Also functions as a receptor for various drugs and psychoactive substances, including ergot alkaloid derivatives, 1-2,5,-dimethoxy-4-iodophenyl-2-aminopropane (DOI) and lysergic acid diethylamide (LSD). Ligand binding causes a conformation change that triggers signaling via guanine nucleotide-binding proteins (G proteins) and modulates the activity of downstream effectors. HTR2C is coupled to G(q)/G(11) G alpha proteins and activates phospholipase C-beta, releasing diacylglycerol (DAG) and inositol 1,4,5-trisphosphate (IP3) second messengers that modulate the activity of phosphatidylinositol 3-kinase and promote the release of Ca(2+) ions from intracellular stores, respectively. Beta-arrestin family members inhibit signaling via G proteins and mediate activation of alternative signaling pathways. Regulates neuronal activity via the activation of short transient receptor potential calcium channels in the brain, and thereby modulates the activation of pro-opiomelanocortin neurons and the release of CRH that then regulates the release of corticosterone. Plays a role in the regulation of appetite and eating behavior, responses to anxiogenic stimuli and stress. Plays a role in insulin sensitivity and glucose homeostasis. This is 5-hydroxytryptamine receptor 2C from Homo sapiens (Human).